The sequence spans 432 residues: Crenactin (432 aa).

Residues 20 to 24 (TSYVK), 182 to 184 (GGH), 235 to 239 (EVVKR), 354 to 358 (GAFSW), and glutamine 399 contribute to the ATP site.

It belongs to the actin family. In terms of assembly, monomer. The crenactin monomers polymerize into right-handed helical filaments, with 8 subunits per complete turn of the helix. Forms single-stranded filaments under high salt concentrations and double-stranded filaments under low salt concentrations. Interacts with arcadin-1 and arcadin-2.

Its subcellular location is the cytoplasm. The protein localises to the cytoskeleton. The enzyme catalyses ATP + H2O = ADP + phosphate + H(+). Crenactin polymerization is inhibited by interaction with arcadin-2. Also significantly inhibited by elevated antibiotic A22 concentrations. In terms of biological role, forms the backbone of an actin-like archaeal cytoskeleton, which is involved in cell shape determination. Has ATPase activity. Shows highest activity towards ATP or GTP as nucleotide, and only residual activity on UTP, CTP and dNTPs. This is Crenactin from Pyrobaculum calidifontis (strain DSM 21063 / JCM 11548 / VA1).